The primary structure comprises 435 residues: Trigger factor (435 aa).

The PPIase FKBP-type domain maps to 162 to 247 (GDRVIIDFKG…VKNVAEATLP (86 aa)).

The protein belongs to the FKBP-type PPIase family. Tig subfamily.

Its subcellular location is the cytoplasm. It catalyses the reaction [protein]-peptidylproline (omega=180) = [protein]-peptidylproline (omega=0). Its function is as follows. Involved in protein export. Acts as a chaperone by maintaining the newly synthesized protein in an open conformation. Functions as a peptidyl-prolyl cis-trans isomerase. This Chromobacterium violaceum (strain ATCC 12472 / DSM 30191 / JCM 1249 / CCUG 213 / NBRC 12614 / NCIMB 9131 / NCTC 9757 / MK) protein is Trigger factor.